A 473-amino-acid polypeptide reads, in one-letter code: Siroheme synthase (473 aa).

Residues 1–203 (MNYLPIFIDL…GNKEQAINVL (203 aa)) form a precorrin-2 dehydrogenase /sirohydrochlorin ferrochelatase region. NAD(+) is bound by residues 22 to 23 (EV) and 43 to 44 (KE). Residue S128 is modified to Phosphoserine. The interval 215–473 (GEIILVGAGP…KNKFSTLTFI (259 aa)) is uroporphyrinogen-III C-methyltransferase. S-adenosyl-L-methionine is bound at residue P224. Residue D247 is the Proton acceptor of the active site. The Proton donor role is filled by K269. Residues 300–302 (GGD), I305, M382, and G411 contribute to the S-adenosyl-L-methionine site.

In the N-terminal section; belongs to the precorrin-2 dehydrogenase / sirohydrochlorin ferrochelatase family. The protein in the C-terminal section; belongs to the precorrin methyltransferase family.

The catalysed reaction is uroporphyrinogen III + 2 S-adenosyl-L-methionine = precorrin-2 + 2 S-adenosyl-L-homocysteine + H(+). It carries out the reaction precorrin-2 + NAD(+) = sirohydrochlorin + NADH + 2 H(+). The enzyme catalyses siroheme + 2 H(+) = sirohydrochlorin + Fe(2+). It functions in the pathway cofactor biosynthesis; adenosylcobalamin biosynthesis; precorrin-2 from uroporphyrinogen III: step 1/1. It participates in cofactor biosynthesis; adenosylcobalamin biosynthesis; sirohydrochlorin from precorrin-2: step 1/1. Its pathway is porphyrin-containing compound metabolism; siroheme biosynthesis; precorrin-2 from uroporphyrinogen III: step 1/1. The protein operates within porphyrin-containing compound metabolism; siroheme biosynthesis; siroheme from sirohydrochlorin: step 1/1. It functions in the pathway porphyrin-containing compound metabolism; siroheme biosynthesis; sirohydrochlorin from precorrin-2: step 1/1. Multifunctional enzyme that catalyzes the SAM-dependent methylations of uroporphyrinogen III at position C-2 and C-7 to form precorrin-2 via precorrin-1. Then it catalyzes the NAD-dependent ring dehydrogenation of precorrin-2 to yield sirohydrochlorin. Finally, it catalyzes the ferrochelation of sirohydrochlorin to yield siroheme. The protein is Siroheme synthase of Buchnera aphidicola subsp. Acyrthosiphon pisum (strain APS) (Acyrthosiphon pisum symbiotic bacterium).